The primary structure comprises 155 residues: Small ribosomal subunit protein uS7 (155 aa).

The protein belongs to the universal ribosomal protein uS7 family. In terms of assembly, part of the 30S ribosomal subunit. Contacts proteins S9 and S11.

Functionally, one of the primary rRNA binding proteins, it binds directly to 16S rRNA where it nucleates assembly of the head domain of the 30S subunit. Is located at the subunit interface close to the decoding center, probably blocks exit of the E-site tRNA. The sequence is that of Small ribosomal subunit protein uS7 from Chlorobium phaeobacteroides (strain BS1).